Reading from the N-terminus, the 638-residue chain is Guanylate-binding protein 7 (638 aa).

Residues 1 to 310 (MASEIHMPGP…DAINSGATPC (310 aa)) are GTPase domain (Globular). The GB1/RHD3-type G domain occupies 35–277 (TQPVVVVAIV…FCSYIFTHAK (243 aa)). Residues 45 to 52 (GLYRTGKS), 67 to 69 (LGC), and 97 to 101 (DTEGL) contribute to the GTP site. The segment at 311 to 638 (LENAMAVLAQ…LRNPGKKIIS (328 aa)) is interaction with the CYBA-CYBB complex. The segment at 590-638 (PSVFSQILDVAGSIFIAALPGAAKLVDLGMKILSSLCNRLRNPGKKIIS) is C-terminal tail; required for its localization to cytoplasmic vesicle.

The protein belongs to the TRAFAC class dynamin-like GTPase superfamily. GB1/RHD3 GTPase family. GB1 subfamily. In terms of assembly, monomer and dimer. Interacts with CYBA, CYBA-CYBB complex and ATG4B. Interacts (via GB1/RHD3-type G domain) with NCF2 and NCF2-NCF4 complex.

Its subcellular location is the cytoplasmic vesicle membrane. It carries out the reaction GTP + H2O = GDP + phosphate + H(+). The catalysed reaction is GDP + H2O = GMP + phosphate + H(+). Interferon (IFN)-inducible GTPase that plays important roles in innate immunity against a diverse range of bacterial, viral and protozoan pathogens. Hydrolyzes GTP to GMP in two consecutive cleavage reactions and predominantly uses GTP and not GDP or GMP as the substrate. Following infection, recruited to the pathogen-containing vacuoles or vacuole-escaped bacteria and acts as a positive regulator of inflammasome assembly by promoting the release of inflammasome ligands from bacteria. Acts by promoting lysis of pathogen-containing vacuoles, releasing pathogens into the cytosol. Following pathogen release in the cytosol, promotes recruitment of proteins that mediate bacterial cytolysis: this liberates ligands that are detected by inflammasomes, such as lipopolysaccharide (LPS) that activates the non-canonical CASP4/CASP11 inflammasome or double-stranded DNA (dsDNA) that activates the AIM2 inflammasome. Also promotes IFN-gamma-mediated host defense against bacterial infections by regulating oxidative responses and bacteriolytic peptide generation. May help to assemble NADPH oxidase on phagosomal membranes by acting as a bridging protein between NADPH oxidase cytosolic subunits NCF2-NCF4 and the membrane subunits CYBA-CYBB. Participates along with GBP1 in trafficking monoubiquinated protein cargo to autolysosomes for generating ubiquitin-derived antimicrobial peptides. Facilitates influenza A virus replication by inhibiting the activation of NF-kappaB and JAK-STAT signaling pathways and the expression of type I, type III interferons and pro-inflammatory cytokines. Confers protection to several pathogens, including the bacterial pathogens Listeria monocytogenes and Mycobacterium bovis BCG as well as the protozoan pathogen Toxoplasma gondii. Required for disruption of the parasitophorous vacuole formed following T.gondii infection and subsequent killing of the parasite. The protein is Guanylate-binding protein 7 (GBP7) of Homo sapiens (Human).